Consider the following 58-residue polypeptide: Large ribosomal subunit protein bL32c (58 aa).

The protein belongs to the bacterial ribosomal protein bL32 family.

The protein resides in the plastid. Its subcellular location is the chloroplast. This is Large ribosomal subunit protein bL32c from Chaetosphaeridium globosum (Charophycean green alga).